We begin with the raw amino-acid sequence, 50 residues long: Small ribosomal subunit protein uS14 (50 aa).

Zn(2+)-binding residues include C15, C18, C33, and C36.

Belongs to the universal ribosomal protein uS14 family. Zinc-binding uS14 subfamily. Part of the 30S ribosomal subunit. Zn(2+) serves as cofactor.

Binds 16S rRNA, required for the assembly of 30S particles. The chain is Small ribosomal subunit protein uS14 from Methanosarcina acetivorans (strain ATCC 35395 / DSM 2834 / JCM 12185 / C2A).